Here is a 2946-residue protein sequence, read N- to C-terminus: MASEKPGPGPGLEPQPVGLIAVGAAGGGGGGSGGGGTGGSGMGELRGASGSGSVMLPAGMINPSVPIRNIRMKFAVLIGLIQVGEVSNRDIVETVLNLLVGGEFDLEMNFIIQDAESITCMTELLEHCDVTCQAEIWSMFTAILRKSVRNLQTSTEVGLIEQVLLKMSAVDDMIADLLVDMLGVLASYSITVKELKLLFSMLRGESGIWPRHAVKLLSVLNQMPQRHGPDTFFNFPGCSAAAIALPPIAKWPYQNGFTLNTWFRMDPLNNINVDKDKPYLYCFRTSKGVGYSAHFVGNCLIVTSLKSKGKGFQHCVKYDFQPRKWYMISIVHIYNRWRNSEIRCYVNGQLVSYGDMAWHVNTNDSYDKCFLGSSETADANRVFCGQLGAVYVFSEALNPAQIFAIHQLGPGYKSTFKFKSESDIHLAEHHKQVLYDGKLASSIAFTYNAKATDAQLCLESSPKENASIFVHSPHALMLQDVKAIVTHSIHSAIHSIGGIQVLFPLFAQLDNRQLNDSQVETTVCATLLAFLVELLKSSVAMQEQMLGGKGFLVIGYLLEKSSRVHITRAVLEQFLSFAKYLDGLSHGAPLLKQLCDHILFNPAIWIHTPAKVQLSLYTYLSAEFIGTATIYTTIRRVGTVLQLMHTLKYYYWVINPADSSGITPKGLDGPRPSQKEIISLRAFMLLFLKQLILKDRGVKEDELQSILNYLLTMHEDENIHDVLQLLVALMSEHPASMIPAFDQRNGIRVIYKLLASKSESIWVQALKVLGYFLKHLGHKRKVEIMHTHSLFTLLGERLMLHTNTVTVTTYNTLYEILTEQVCTQVVHKPHPEPDSTVKIQNPMILKVVATLLKNSTPSAELMEVRRLFLSDMIKLFSNSRENRRCLLQCSVWQDWMFSLGYINPKNSEEQKITEMVYNIFRILLYHAIKYEWGGWRVWVDTLSIAHSKVTYEAHKEYLAKMYEEYQRQEEENIKKGKKGNVSTISGLSSQTTGAKGGMEIREIEDLSQSQSPESETDYPVSTDTRDLLMSTKVSDDILGNSDRPGSGVHVEVHDLLVDIKAEKVEATEVKLDDMDLSPETLVGGENGALVEVESLLDNVYSAAVEKLQNNVHGSVGIIKKNEEKDNGPLITLADEKEDLPNSSTSFLFDKIPKQEEKLLPELSSNHIIPNIQDTQVHLGVSDDLGLLAHMTGSVDLTCTSSIIEEKEFKIHTTSDGMSSISERDLASSTKGLEYAEMTATTLETESSSSKIVPNIDAGSIISDTERSDDGKESGKEIRKIQTTTTTQAVQGRSITQQDRDLRVDLGFRGMPMTEEQRRQFSPGPRTTMFRIPEFKWSPMHQRLLTDLLFALETDVHVWRSHSTKSVMDFVNSNENIIFVHNTIHLISQMVDNIIIACGGILPLLSAATSPTGSKTELENIEVTQGMSAETAVTFLSRLMAMVDVLVFASSLNFSEIEAEKNMSSGGLMRQCLRLVCCVAVRNCLECRQRQRDRGNKSSHGSSKPQEVPQSVTATAASKTPLENVPGNLSPIKDPDRLLQDVDINRLRAVVFRDVDDSKQAQFLALAVVYFISVLMVSKYRDILEPQRETTRTGSQPGRNIRQEINSPTSTVVVIPSIPHPSLNHGFLAKLIPEQSFGHSFYKETPAAFPDTIKEKETPTPGEDIQVESSIPHTDSGIGEEQVASILNGAELETSTGPDAMSELLSTLSSEVKKSQESLTENPSETLKPATSISSISQTKGINVKEILKSLVAAPVEIAECGPEPIPYPDPALKRETQAILPMQFHSFDRSVVVPVKKPPPGSLAVTTVGATTAGSGLPTGSTSNIFAATGATPKSMINTTGAVDSGSSSSSSSSSFVNGATSKNLPAVQTVAPMPEDSAENMSITAKLERALEKVAPLLREIFVDFAPFLSRTLLGSHGQELLIEGLVCMKSSTSVVELVMLLCSQEWQNSIQKNAGLAFIELINEGRLLCHAMKDHIVRVANEAEFILNRQRAEDVHKHAEFESQCAQYAADRREEEKMCDHLISAAKHRDHVTANQLKQKILNILTNKHGAWGAVSHSQLHDFWRLDYWEDDLRRRRRFVRNAFGSTHAEALLKAAIEYGTEEDVVKSKKTFRSQAIVNQNAETELMLEGDDDAVSLLQEKEIDNLAGPVVLSTPAQLIAPVVVAKGTLSITTTEIYFEVDEDDSAFKKIDTKVLAYTEGLHGKWMFSEIRAVFSRRYLLQNTALEVFMANRTSVMFNFPDQATVKKVVYSLPRVGVGTSYGLPQARRISLATPRQLYKSSNMTQRWQRREISNFEYLMFLNTIAGRTYNDLNQYPVFPWVLTNYESEELDLTLPGNFRDLSKPIGALNPKRAVFYAERYETWEDDQSPPYHYNTHYSTATSTLSWLVRIEPFTTFFLNANDGKFDHPDRTFSSVARSWRTSQRDTSDVKELIPEFYYLPEMFVNSNGYNLGVREDEVVVNDVDLPPWAKKPEDFVRINRMALESEFVSCQLHQWIDLIFGYKQRGPEAVRALNVFHYLTYEGSVNLDSITDPVLREAMEAQIQNFGQTPSQLLIEPHPPRSSAMHLCFLPQSPLMFKDQMQQDVIMVLKFPSNSPVTHVAANTLPHLTIPAVVTVTCSRLFAVNRWHNTVGLRGAPGYSLDQAHHLPIEMDPLIANNSGVNKRQITDLVDQSIQINAHCFVVTADNRYILICGFWDKSFRVYSTETGKLTQIVFGHWDVVTCLARSESYIGGDCYIVSGSRDATLLLWYWSGRHHIIGDNPNSSDYPAPRAVLTGHDHEVVCVSVCAELGLVISGAKEGPCLVHTITGDLLRALEGPENCLFPRLISVSSEGHCIIYYERGRFSNFSINGKLLAQMEINDSTRAILLSSDGQNLVTGGDNGVVEVWQACDFKQLYIYPGCDAGIRAMDLSHDQRTLITGMASGSIVAFNIDFNRWHYEHQNRY.

The interval 971–995 is disordered; sequence ENIKKGKKGNVSTISGLSSQTTGAK. The span at 980–993 shows a compositional bias: polar residues; that stretch reads NVSTISGLSSQTTG. Residues serine 1011 and serine 1014 each carry the phosphoserine modification. A WD 1 repeat occupies 1326–1368; the sequence is TTMFRIPEFKWSPMHQRLLTDLLFALETDVHVWRSHSTKSVMD. Disordered stretches follow at residues 1490–1531, 1651–1675, 1711–1731, and 1841–1860; these read QRDR…LSPI, TIKE…HTDS, VKKS…PATS, and GAVD…VNGA. A compositionally biased stretch (polar residues) spans 1497–1517; that stretch reads SSHGSSKPQEVPQSVTATAAS. Position 1529 is a phosphoserine (serine 1529). Serine 1714 and serine 1717 each carry phosphoserine. Over residues 1716 to 1731 the composition is skewed to polar residues; that stretch reads ESLTENPSETLKPATS. Residues 1845 to 1855 show a composition bias toward low complexity; the sequence is SGSSSSSSSSS. Serine 2138 carries the post-translational modification Phosphoserine. The BEACH-type PH domain maps to 2147-2255; it reads NLAGPVVLST…TVKKVVYSLP (109 aa). The 290-residue stretch at 2274 to 2563 folds into the BEACH domain; it reads ATPRQLYKSS…QLLIEPHPPR (290 aa). Residue serine 2575 is modified to Phosphoserine. WD repeat units lie at residues 2718-2761, 2778-2818, 2860-2899, and 2902-2941; these read GHWD…HIIG, GHDH…RALE, EIND…QLYI, and GCDA…WHYE.

Belongs to the WD repeat neurobeachin family. As to quaternary structure, interacts with RII subunit of PKA. As to expression, predominant in many brain structures. Also expressed at medium levels in spleen, thymus, prostate, testis and ovary. Low level expression is seen in heart, kidney, pancreas, skeletal muscle and intestine.

It localises to the cytoplasm. It is found in the membrane. Its function is as follows. Binds to type II regulatory subunits of protein kinase A and anchors/targets them to the membrane. May anchor the kinase to cytoskeletal and/or organelle-associated proteins. In Homo sapiens (Human), this protein is Neurobeachin.